Reading from the N-terminus, the 183-residue chain is MKAYLALISAAVIGLAACSQEPAAPAAEATPAAEAPASEAPAAEAAPADAAEAPAAGNCAATVESNDNMQFNTKDIQVSKACKEFTITLKHTGTQPKASMGHNLVIAKAEDMDGVFKDGVGAADTDYVKPDDARVVAHTKLIGGGEEASLTLDPAKLADGEYKFACTFPGHGALMNGKVTLVD.

Residues 1-17 (MKAYLALISAAVIGLAA) form the signal peptide. Cys18 is lipidated: N-palmitoyl cysteine. Cys18 is lipidated: S-diacylglycerol cysteine. Residues 27 to 51 (AEATPAAEAPASEAPAAEAAPADAA) form a disordered region. Residues 57–183 (GNCAATVESN…LMNGKVTLVD (127 aa)) form the Plastocyanin-like domain. Cu cation is bound by residues His102, Cys166, His171, and Met175.

Requires Cu cation as cofactor.

The protein localises to the cell outer membrane. This chain is Outer membrane protein H.8, found in Neisseria meningitidis serogroup B (strain ATCC BAA-335 / MC58).